The sequence spans 204 residues: Thiamine-phosphate synthase (204 aa).

4-amino-2-methyl-5-(diphosphooxymethyl)pyrimidine contacts are provided by residues 34–38 (QYRDK) and Asp-66. Residues Asp-67 and Asp-86 each contribute to the Mg(2+) site. Ser-104 serves as a coordination point for 4-amino-2-methyl-5-(diphosphooxymethyl)pyrimidine. 131 to 133 (TST) serves as a coordination point for 2-[(2R,5Z)-2-carboxy-4-methylthiazol-5(2H)-ylidene]ethyl phosphate. Lys-134 is a binding site for 4-amino-2-methyl-5-(diphosphooxymethyl)pyrimidine. Residues Gly-160 and 180–181 (VS) contribute to the 2-[(2R,5Z)-2-carboxy-4-methylthiazol-5(2H)-ylidene]ethyl phosphate site.

Belongs to the thiamine-phosphate synthase family. Mg(2+) serves as cofactor.

It carries out the reaction 2-[(2R,5Z)-2-carboxy-4-methylthiazol-5(2H)-ylidene]ethyl phosphate + 4-amino-2-methyl-5-(diphosphooxymethyl)pyrimidine + 2 H(+) = thiamine phosphate + CO2 + diphosphate. The catalysed reaction is 2-(2-carboxy-4-methylthiazol-5-yl)ethyl phosphate + 4-amino-2-methyl-5-(diphosphooxymethyl)pyrimidine + 2 H(+) = thiamine phosphate + CO2 + diphosphate. The enzyme catalyses 4-methyl-5-(2-phosphooxyethyl)-thiazole + 4-amino-2-methyl-5-(diphosphooxymethyl)pyrimidine + H(+) = thiamine phosphate + diphosphate. It functions in the pathway cofactor biosynthesis; thiamine diphosphate biosynthesis; thiamine phosphate from 4-amino-2-methyl-5-diphosphomethylpyrimidine and 4-methyl-5-(2-phosphoethyl)-thiazole: step 1/1. In terms of biological role, condenses 4-methyl-5-(beta-hydroxyethyl)thiazole monophosphate (THZ-P) and 2-methyl-4-amino-5-hydroxymethyl pyrimidine pyrophosphate (HMP-PP) to form thiamine monophosphate (TMP). This is Thiamine-phosphate synthase from Picrophilus torridus (strain ATCC 700027 / DSM 9790 / JCM 10055 / NBRC 100828 / KAW 2/3).